An 800-amino-acid polypeptide reads, in one-letter code: Ribosome-releasing factor 2, mitochondrial (800 aa).

In terms of domain architecture, tr-type G spans 21–307; it reads SKVRNIGIIA…AIANYLPSPS (287 aa). Residues 30–37, 95–99, and 147–150 contribute to the GTP site; these read AHIDAGKT, DTPGH, and NKMD.

The protein belongs to the TRAFAC class translation factor GTPase superfamily. Classic translation factor GTPase family. EF-G/EF-2 subfamily.

It is found in the mitochondrion. Mitochondrial GTPase that mediates the disassembly of ribosomes from messenger RNA at the termination of mitochondrial protein biosynthesis. Not involved in the GTP-dependent ribosomal translocation step during translation elongation. In Kluyveromyces lactis (strain ATCC 8585 / CBS 2359 / DSM 70799 / NBRC 1267 / NRRL Y-1140 / WM37) (Yeast), this protein is Ribosome-releasing factor 2, mitochondrial.